The chain runs to 66 residues: Large ribosomal subunit protein bL35 (66 aa).

Basic residues predominate over residues M1–R16. Residues M1–G20 form a disordered region.

Belongs to the bacterial ribosomal protein bL35 family.

The protein is Large ribosomal subunit protein bL35 of Streptococcus thermophilus (strain ATCC BAA-250 / LMG 18311).